An 850-amino-acid chain; its full sequence is Trimethylamine-N-oxide reductase (850 aa).

Residues 1–39 (MKNKDSLHVSRRRFLAQLGGLTVAGMLGPSLLTPRSARA) constitute a signal peptide (tat-type signal). S191 provides a ligand contact to Mo-bis(molybdopterin guanine dinucleotide).

Belongs to the prokaryotic molybdopterin-containing oxidoreductase family. Requires Mo-bis(molybdopterin guanine dinucleotide) as cofactor. Post-translationally, predicted to be exported by the Tat system. The position of the signal peptide cleavage has not been experimentally proven.

It localises to the periplasm. The catalysed reaction is trimethylamine + 2 Fe(III)-[cytochrome c] + H2O = trimethylamine N-oxide + 2 Fe(II)-[cytochrome c] + 3 H(+). Reduces trimethylamine-N-oxide (TMAO) into trimethylamine; an anaerobic reaction coupled to energy-yielding reactions. The sequence is that of Trimethylamine-N-oxide reductase (torA) from Salmonella typhi.